Consider the following 337-residue polypeptide: Serpentine receptor class beta-6 (337 aa).

The next 7 membrane-spanning stretches (helical) occupy residues 20 to 40 (QFYTLLTSIFSVFPLLYLIIF), 62 to 82 (ILISVLNNCVVFAHHVVIPFL), 98 to 118 (IFQNIGVFGISCPMLTILGIT), 138 to 158 (IGVFIGVFAMLCDMALVYFFF), 183 to 203 (WLCYSLLAINSVNLVFNYFLV), 234 to 254 (TFISFIHVFFFSLYLIFTLII), and 273 to 293 (GVYITIPTYNLIIGIASCVIL).

This sequence belongs to the nematode receptor-like protein srb family. Expressed in the ADL, ADF and ASH chemosensory neurons in the head and in the PHA and PHB chemosensory neurons in the tail. Low expression also observed in the egg-laying structures in the mid-body region.

It localises to the cell membrane. Functionally, mediates recognition and avoidance of Streptomyces species by detecting dodecanoic acid secreted by the bacteria. Also mediates avoidance of decanoic acid which is not secreted by Streptomyces species but this may represent an additional important avoidance response in the environment. This chain is Serpentine receptor class beta-6 (srb-6), found in Caenorhabditis elegans.